Here is a 228-residue protein sequence, read N- to C-terminus: Deoxyribose-phosphate aldolase (228 aa).

Asp93 serves as the catalytic Proton donor/acceptor. Residue Lys159 is the Schiff-base intermediate with acetaldehyde of the active site. Lys188 acts as the Proton donor/acceptor in catalysis.

The protein belongs to the DeoC/FbaB aldolase family. DeoC type 1 subfamily.

The protein resides in the cytoplasm. The catalysed reaction is 2-deoxy-D-ribose 5-phosphate = D-glyceraldehyde 3-phosphate + acetaldehyde. It participates in carbohydrate degradation; 2-deoxy-D-ribose 1-phosphate degradation; D-glyceraldehyde 3-phosphate and acetaldehyde from 2-deoxy-alpha-D-ribose 1-phosphate: step 2/2. In terms of biological role, catalyzes a reversible aldol reaction between acetaldehyde and D-glyceraldehyde 3-phosphate to generate 2-deoxy-D-ribose 5-phosphate. This is Deoxyribose-phosphate aldolase from Carboxydothermus hydrogenoformans (strain ATCC BAA-161 / DSM 6008 / Z-2901).